Consider the following 331-residue polypeptide: MSDALINGLAGAGGGIIAQLLTYPLQTVNTRQQTERDLKREKRKLGTIEHMCQVVKQEGWERLYGGLAPSLAGTAASQGVYYYFYQVFRNRAEATALARKKKGLGDGSVGMFASLLVAAFAGSVNVLMTNPIWVIVTRMQTHRKMTKDQTAAPESPSSNAEALVAVEPRPYGTFNTIREVYDEAGITGFWKGVIPTLIMVSNPSMQFMLYETMLTKLKKKRALKGSNNVTALETFLLGAVAKLGATVTTYPLLVVKSRLQAKQVTTGDKRQQYKGTLDAILKMIRYEGLYGFYKGMSTKIVQSVLAAAVLFMIKEELVKGAKLLLSNATSS.

3 Solcar repeats span residues 2–91 (SDAL…FRNR), 109–216 (VGMF…MLTK), and 229–320 (VTAL…LVKG). Transmembrane regions (helical) follow at residues 5-25 (LING…TYPL), 63-85 (LYGG…YYFY), 116-136 (LVAA…WVIV), 180-200 (VYDE…LIMV), 235-255 (FLLG…LLVV), and 293-313 (YKGM…LFMI).

It belongs to the mitochondrial carrier (TC 2.A.29) family. In terms of assembly, homodimer. As to expression, expressed in cotyledons, hypocotyls, vascular tissues, trichomes, hydathodes, seeds, pedicels, flowers and stigma.

It is found in the glyoxysome membrane. Its activity is regulated as follows. Inhibited by pyridoxal 5'-phosphate, bathophenanthroline, tannic acid, mersalyl, mercuric chloride and bromocresol purple. Mediates the NAD(+) import into peroxisomes. Favors the NAD(+)(in)/AMP(out) antiport exchange, but is also able to catalyze a low unidirectional transport that might be essential under special conditions. Transports CoA, dephospho-CoA, acetyl-CoA, adenosine 3',5'-diphosphate (PAP), NAD(+), AMP, ADP and NADH, but has no activity with ATP, GTP, GDP, NADPH, NADP(+) or FAD. Required for peroxisomes proliferation. The polypeptide is Peroxisomal nicotinamide adenine dinucleotide carrier (PXN) (Arabidopsis thaliana (Mouse-ear cress)).